A 182-amino-acid polypeptide reads, in one-letter code: Dual-action ribosomal maturation protein DarP (182 aa).

Residues 1-25 (MEENLADNSEREARPSKTKRKKEMH) are disordered.

It belongs to the DarP family.

It is found in the cytoplasm. In terms of biological role, member of a network of 50S ribosomal subunit biogenesis factors which assembles along the 30S-50S interface, preventing incorrect 23S rRNA structures from forming. Promotes peptidyl transferase center (PTC) maturation. The sequence is that of Dual-action ribosomal maturation protein DarP from Nitrosospira multiformis (strain ATCC 25196 / NCIMB 11849 / C 71).